The primary structure comprises 201 residues: Guanylate kinase (201 aa).

The Guanylate kinase-like domain maps to glycine 7 to asparagine 186. Serine 14–threonine 21 lines the ATP pocket.

The protein belongs to the guanylate kinase family.

It is found in the cytoplasm. It carries out the reaction GMP + ATP = GDP + ADP. Its function is as follows. Essential for recycling GMP and indirectly, cGMP. This Wolbachia pipientis wMel protein is Guanylate kinase.